We begin with the raw amino-acid sequence, 625 residues long: tRNA uridine 5-carboxymethylaminomethyl modification enzyme MnmG (625 aa).

FAD is bound at residue 14–19; it reads GAGHAG. 273-287 is a binding site for NAD(+); that stretch reads GPRYCPSIEDKIVRF.

Belongs to the MnmG family. As to quaternary structure, homodimer. Heterotetramer of two MnmE and two MnmG subunits. FAD is required as a cofactor.

It is found in the cytoplasm. Its function is as follows. NAD-binding protein involved in the addition of a carboxymethylaminomethyl (cmnm) group at the wobble position (U34) of certain tRNAs, forming tRNA-cmnm(5)s(2)U34. The polypeptide is tRNA uridine 5-carboxymethylaminomethyl modification enzyme MnmG (Clostridium botulinum (strain Okra / Type B1)).